The chain runs to 426 residues: Serine--tRNA ligase (426 aa).

Thr-233–Glu-235 is a binding site for L-serine. Arg-264 to Glu-266 is a binding site for ATP. Glu-287 lines the L-serine pocket. Glu-351–Ser-354 is an ATP binding site. Ser-387 is a binding site for L-serine.

Belongs to the class-II aminoacyl-tRNA synthetase family. Type-1 seryl-tRNA synthetase subfamily. In terms of assembly, homodimer. The tRNA molecule binds across the dimer.

The protein resides in the cytoplasm. It carries out the reaction tRNA(Ser) + L-serine + ATP = L-seryl-tRNA(Ser) + AMP + diphosphate + H(+). It catalyses the reaction tRNA(Sec) + L-serine + ATP = L-seryl-tRNA(Sec) + AMP + diphosphate + H(+). It participates in aminoacyl-tRNA biosynthesis; selenocysteinyl-tRNA(Sec) biosynthesis; L-seryl-tRNA(Sec) from L-serine and tRNA(Sec): step 1/1. Its function is as follows. Catalyzes the attachment of serine to tRNA(Ser). Is also able to aminoacylate tRNA(Sec) with serine, to form the misacylated tRNA L-seryl-tRNA(Sec), which will be further converted into selenocysteinyl-tRNA(Sec). The sequence is that of Serine--tRNA ligase from Pseudomonas putida (strain GB-1).